A 326-amino-acid polypeptide reads, in one-letter code: Olfactory receptor 11H12 (326 aa).

Over 1–44 (MCPLTLQVTGLMNVSEPNSSFAFVNEFILQGFTCEWTIQIFLFS) the chain is Extracellular. Residues asparagine 13 and asparagine 18 are each glycosylated (N-linked (GlcNAc...) asparagine). A helical membrane pass occupies residues 45–65 (LFTTTYALTITGNGAIAFVLW). Residues 66–72 (CDWRLHT) lie on the Cytoplasmic side of the membrane. A helical membrane pass occupies residues 73 to 93 (PMYMFLGNFSFLEIWYVSSTV). Residues 94–112 (PKMLVNFLSEKKNISFAGC) lie on the Extracellular side of the membrane. An N-linked (GlcNAc...) asparagine glycan is attached at asparagine 106. Cysteine 112 and cysteine 194 are joined by a disulfide. A helical membrane pass occupies residues 113–133 (FLQFYFFFSLGTSECLLLTVM). Residues 134-158 (AFDQYLAICRPLLYPNIMTGHLCAK) lie on the Cytoplasmic side of the membrane. Residues 159–179 (LVILCWVCGFLWFLIPIVLIS) traverse the membrane as a helical segment. Topologically, residues 180–216 (QMPFCGPNIIDHVVCDPGPRFALDCVSAPRIQLFCYT) are extracellular. The chain crosses the membrane as a helical span at residues 217 to 237 (LSSLVIFGNFLFIIGSYTLVL). Topologically, residues 238-259 (KAVLGMPSSTGRHKAFSTCGSH) are cytoplasmic. A helical transmembrane segment spans residues 260–280 (LAVVSLCYSSLMVMYVSPGLG). Residues 281 to 287 (HSTGMQK) lie on the Extracellular side of the membrane. Residues 288 to 308 (IETLFYAMVTPLFNPLIYSLQ) form a helical membrane-spanning segment. Over 309-326 (NKEIKAALRKVLGSSNII) the chain is Cytoplasmic.

The protein belongs to the G-protein coupled receptor 1 family.

It localises to the cell membrane. Odorant receptor. The sequence is that of Olfactory receptor 11H12 (OR11H12) from Homo sapiens (Human).